A 275-amino-acid polypeptide reads, in one-letter code: 3-methyl-2-oxobutanoate hydroxymethyltransferase (275 aa).

Mg(2+)-binding residues include D44 and D83. Residues 44–45 (DS), D83, and K113 contribute to the 3-methyl-2-oxobutanoate site. Mg(2+) is bound at residue E115. E182 (proton acceptor) is an active-site residue.

The protein belongs to the PanB family. In terms of assembly, homodecamer; pentamer of dimers. It depends on Mg(2+) as a cofactor.

It localises to the cytoplasm. The catalysed reaction is 3-methyl-2-oxobutanoate + (6R)-5,10-methylene-5,6,7,8-tetrahydrofolate + H2O = 2-dehydropantoate + (6S)-5,6,7,8-tetrahydrofolate. The protein operates within cofactor biosynthesis; (R)-pantothenate biosynthesis; (R)-pantoate from 3-methyl-2-oxobutanoate: step 1/2. Functionally, catalyzes the reversible reaction in which hydroxymethyl group from 5,10-methylenetetrahydrofolate is transferred onto alpha-ketoisovalerate to form ketopantoate. The chain is 3-methyl-2-oxobutanoate hydroxymethyltransferase from Enterococcus faecalis (strain ATCC 700802 / V583).